The following is a 372-amino-acid chain: Biglycan (372 aa).

A signal peptide spans 1-19; the sequence is MPTMWPLWLLASLLALSQA. A propeptide spanning residues 20-40 is cleaved from the precursor; that stretch reads LPFEQKGFWDFTLDDGLPMLN. 2 O-linked (Xyl...) (glycosaminoglycan) serine glycosylation sites follow: Ser-45 and Ser-51. 2 disulfides stabilise this stretch: Cys-67/Cys-73 and Cys-71/Cys-80. 12 LRR repeats span residues 86–106, 107–130, 131–154, 155–175, 176–199, 200–224, 225–245, 246–269, 270–293, 294–316, 317–346, and 347–372; these read KAVPKEISPDTTLLDLQNNEI, SELRKDDFKGLQHLYALVLVNNKI, SKIHEKAFSPLRKLQKLYISKNHL, VEIPPNLPSSLVELRIHDNRI, RKVPKGVFSGLRNMNCIEMGGNPL, ENSGFQPGAFDGLKLNYLRISEAKL, TGIPKDLPETLNELHLDHNKI, QAIELEDLLRYSKLYRLGLGHNQI, RMIENGSLSFLPTLRELHLDNNKL, SRVPAGLPDLKLLQVVYLHTNNI, TKVGVNDFCPVGFGVKRAYYNGISLFNNPV, and PYWEVQPATFRCVTDRLAIQFGNYKK. 2 N-linked (GlcNAc...) asparagine glycosylation sites follow: Asn-274 and Asn-315. Cys-325 and Cys-358 are disulfide-bonded.

This sequence belongs to the small leucine-rich proteoglycan (SLRP) family. SLRP class I subfamily. As to quaternary structure, homodimer. Forms a ternary complex with MFAP2 and ELN. Post-translationally, the two attached glycosaminoglycan chains can be either chondroitin sulfate or dermatan sulfate.

The protein resides in the secreted. It is found in the extracellular space. Its subcellular location is the extracellular matrix. Functionally, may be involved in collagen fiber assembly. The protein is Biglycan (BGN) of Equus caballus (Horse).